The primary structure comprises 307 residues: Protoheme IX farnesyltransferase (307 aa).

The next 9 helical transmembrane spans lie at 28-48 (VTQLAVFCAVIGMFLATPGMV), 50-70 (WPVLIGGAVGIWLFAGAAFAI), 100-120 (ILLFSLVLGGAGMWTLHVFAN), 122-142 (LTMWLTFATFIGYAIIYTLLL), 149-169 (NIVIGGLSGAMPPALGWAAVA), 176-196 (AWILVLIIFTWTPPHFWALAL), 218-238 (FTLLHILLYTLIMVAATILPF), 243-263 (SGYLYLAVALVLGFGFLVHAW), and 282-302 (IVYLSLLFAALLIDHYFKFGP).

Belongs to the UbiA prenyltransferase family. Protoheme IX farnesyltransferase subfamily.

The protein localises to the cell inner membrane. The enzyme catalyses heme b + (2E,6E)-farnesyl diphosphate + H2O = Fe(II)-heme o + diphosphate. Its pathway is porphyrin-containing compound metabolism; heme O biosynthesis; heme O from protoheme: step 1/1. Functionally, converts heme B (protoheme IX) to heme O by substitution of the vinyl group on carbon 2 of heme B porphyrin ring with a hydroxyethyl farnesyl side group. This is Protoheme IX farnesyltransferase from Ralstonia nicotianae (strain ATCC BAA-1114 / GMI1000) (Ralstonia solanacearum).